Consider the following 501-residue polypeptide: Probable cytosol aminopeptidase (501 aa).

Residues Lys-268 and Asp-273 each contribute to the Mn(2+) site. Lys-280 is a catalytic residue. Mn(2+) contacts are provided by Asp-291, Asp-350, and Glu-352. Arg-354 is a catalytic residue.

This sequence belongs to the peptidase M17 family. Mn(2+) serves as cofactor.

Its subcellular location is the cytoplasm. The catalysed reaction is Release of an N-terminal amino acid, Xaa-|-Yaa-, in which Xaa is preferably Leu, but may be other amino acids including Pro although not Arg or Lys, and Yaa may be Pro. Amino acid amides and methyl esters are also readily hydrolyzed, but rates on arylamides are exceedingly low.. It carries out the reaction Release of an N-terminal amino acid, preferentially leucine, but not glutamic or aspartic acids.. In terms of biological role, presumably involved in the processing and regular turnover of intracellular proteins. Catalyzes the removal of unsubstituted N-terminal amino acids from various peptides. This is Probable cytosol aminopeptidase from Pseudoalteromonas atlantica (strain T6c / ATCC BAA-1087).